Here is a 144-residue protein sequence, read N- to C-terminus: Effector EagT6 (144 aa).

In terms of assembly, homodimer. Two dimers interact with Tse6; this interaction is crucial for Tse6 loading onto VgrG1a.

Plays an essential role in toxin Tse6 delivery to target cells and specifically in the loading of Tse6 onto VgrG1a. The chain is Effector EagT6 from Pseudomonas aeruginosa (strain ATCC 15692 / DSM 22644 / CIP 104116 / JCM 14847 / LMG 12228 / 1C / PRS 101 / PAO1).